The following is a 432-amino-acid chain: Glutamate-1-semialdehyde 2,1-aminomutase 1 (432 aa).

Lys272 is modified (N6-(pyridoxal phosphate)lysine).

The protein belongs to the class-III pyridoxal-phosphate-dependent aminotransferase family. HemL subfamily. In terms of assembly, homodimer. It depends on pyridoxal 5'-phosphate as a cofactor.

The protein resides in the cytoplasm. It carries out the reaction (S)-4-amino-5-oxopentanoate = 5-aminolevulinate. Its pathway is porphyrin-containing compound metabolism; protoporphyrin-IX biosynthesis; 5-aminolevulinate from L-glutamyl-tRNA(Glu): step 2/2. This chain is Glutamate-1-semialdehyde 2,1-aminomutase 1, found in Exiguobacterium sp. (strain ATCC BAA-1283 / AT1b).